Here is a 188-residue protein sequence, read N- to C-terminus: Peptidyl-tRNA hydrolase (188 aa).

Tyr14 contacts tRNA. The active-site Proton acceptor is His19. 3 residues coordinate tRNA: Tyr64, Asn66, and Asn112.

Belongs to the PTH family. In terms of assembly, monomer.

It localises to the cytoplasm. It carries out the reaction an N-acyl-L-alpha-aminoacyl-tRNA + H2O = an N-acyl-L-amino acid + a tRNA + H(+). Hydrolyzes ribosome-free peptidyl-tRNAs (with 1 or more amino acids incorporated), which drop off the ribosome during protein synthesis, or as a result of ribosome stalling. Functionally, catalyzes the release of premature peptidyl moieties from peptidyl-tRNA molecules trapped in stalled 50S ribosomal subunits, and thus maintains levels of free tRNAs and 50S ribosomes. This Clostridium tetani (strain Massachusetts / E88) protein is Peptidyl-tRNA hydrolase.